A 321-amino-acid chain; its full sequence is Glucokinase (321 aa).

ATP is bound at residue 8–13 (GDVGGT).

It belongs to the bacterial glucokinase family.

The protein localises to the cytoplasm. The enzyme catalyses D-glucose + ATP = D-glucose 6-phosphate + ADP + H(+). The sequence is that of Glucokinase from Shigella boydii serotype 18 (strain CDC 3083-94 / BS512).